Reading from the N-terminus, the 235-residue chain is Glial cell line-derived neurotrophic factor (235 aa).

Positions 1-19 (MKLWDILATCLLLLSSVST) are cleaved as a signal peptide. Positions 20–87 (RPLFHKLQPS…DFIEATLGRL (68 aa)) are excised as a propeptide. 2 disordered regions span residues 34–60 (VRSE…ASME) and 91–137 (SDVE…RVKG). Residues 119–128 (GERKRSRGRA) are compositionally biased toward basic residues. Disulfide bonds link C142–C203, C169–C232, and C173–C234. N-linked (GlcNAc...) asparagine glycans are attached at residues N150 and N186.

Belongs to the TGF-beta family. GDNF subfamily. Homodimer; disulfide-linked. Interacts with GFRA1 coreceptor and RET: forms a 2:2:2 ternary complex composed of GDNF ligand, GFRA1 and RET receptor. First expressed at 14 hours post-fertilization (hpf) in the ventral half of anterior somites and in intermediate mesoderm. Ventral somitic expression persists and extends more posteriorly over the next 12 hours. Expressed throughout the ventral trunk mesoderm and endoderm at 24 hpf. By 30 hpf, somitic expression ceases and by 36 hpf, expression becomes restricted to the endodermal cells forming the gut, with expression along the whole length of the developing gut tube at 72 hpf.

It localises to the secreted. Functionally, neurotrophic factor that enhances survival and morphological differentiation of dopaminergic neurons and increases their high-affinity dopamine uptake. Acts by binding to its coreceptor, GFRA1, leading to autophosphorylation and activation of the RET receptor. This is Glial cell line-derived neurotrophic factor from Danio rerio (Zebrafish).